The sequence spans 79 residues: Keratin-associated protein 21-1 (79 aa).

Interacts with hair keratins.

In the hair cortex, hair keratin intermediate filaments are embedded in an interfilamentous matrix, consisting of hair keratin-associated proteins (KRTAP), which are essential for the formation of a rigid and resistant hair shaft through their extensive disulfide bond cross-linking with abundant cysteine residues of hair keratins. The matrix proteins include the high-sulfur and high-glycine-tyrosine keratins. This chain is Keratin-associated protein 21-1 (KRTAP21-1), found in Homo sapiens (Human).